The following is a 177-amino-acid chain: Iron-sulfur cluster assembly protein SufA (177 aa).

Positions 1 to 18 (MTIHIFLCFLLILKIVNA) are cleaved as a signal peptide. Residues Cys-101, Cys-169, and Cys-171 each contribute to the [4Fe-4S] cluster site.

This sequence belongs to the HesB/IscA family. As to quaternary structure, homodimer. Homotetramer formation is observed in vitro.

It is found in the plastid. The protein resides in the apicoplast. It functions in the pathway cofactor biosynthesis; iron-sulfur cluster biosynthesis. Participates in the sulfur mobilization (SUF) pathway for iron-sulfur (Fe-S) cluster biogenesis. Involved in the pre-assembly of [4Fe-4S] clusters and their transfer to target proteins. The protein is Iron-sulfur cluster assembly protein SufA of Plasmodium falciparum (isolate 3D7).